A 435-amino-acid chain; its full sequence is Tumor necrosis factor receptor superfamily member 3 (435 aa).

The first 30 residues, 1–30 (MLLPWATSAPGLAWGPLVLGLFGLLAASQP), serve as a signal peptide directing secretion. At 31 to 227 (QAVPPYASEN…PPEMSGTMLM (197 aa)) the chain is on the extracellular side. An N-linked (GlcNAc...) asparagine glycan is attached at Asn-40. 4 TNFR-Cys repeats span residues 42–81 (TCRD…TVCA), 82–124 (TCAE…KTQC), 125–168 (RCQP…NHCV), and 169–211 (PCKA…TTCK). Intrachain disulfides connect Cys-43-Cys-58, Cys-59-Cys-72, Cys-62-Cys-80, Cys-83-Cys-98, Cys-101-Cys-116, Cys-104-Cys-124, Cys-126-Cys-132, Cys-139-Cys-148, Cys-142-Cys-167, and Cys-170-Cys-185. A glycan (N-linked (GlcNAc...) asparagine) is linked at Asn-177. Residues 228–248 (LAVLLPLAFFLLLATVFSCIW) traverse the membrane as a helical segment. Over 249–435 (KSHPSLCRKL…GPRNQFITHD (187 aa)) the chain is Cytoplasmic. The residue at position 323 (Ser-323) is a Phosphoserine. Positions 373 to 399 (PGPGDLPATPEPPYPIPEEGDPGPPGL) are enriched in pro residues. Residues 373-435 (PGPGDLPATP…GPRNQFITHD (63 aa)) are disordered. Residues 403-417 (HQEDGKAWHLAETEH) are compositionally biased toward basic and acidic residues. Residues 421–435 (TPSNRGPRNQFITHD) are compositionally biased toward polar residues.

In terms of assembly, self-associates; dimerization and trimerization are promoted by lymphotoxin (LTA(1)-LTB(2)). Associates with TRAF3. Associates with TRAF4. Associates with TRAF5. Interacts with Aedes aegypti lymphotoxin beta receptor inhibitor; the interaction reduces dimerization and trimerization of LTBR induced by lymphotoxin (LTA(1)-LTB(2)). As to quaternary structure, (Microbial infection) Interacts with HCV core protein.

The protein resides in the membrane. Its function is as follows. Receptor for the heterotrimeric lymphotoxin containing LTA and LTB, and for TNFS14/LIGHT. Activates NF-kappa-B signaling pathway upon stimulation with lymphotoxin (LTA(1)-LTB(2)). Promotes apoptosis via TRAF3 and TRAF5. May play a role in the development of lymphoid organs. This is Tumor necrosis factor receptor superfamily member 3 (LTBR) from Homo sapiens (Human).